The primary structure comprises 403 residues: Argininosuccinate synthase (403 aa).

10–18 (AYSGGLDTS) is a binding site for ATP. Tyrosine 87 contributes to the L-citrulline binding site. Glycine 117 contacts ATP. L-aspartate contacts are provided by threonine 119, asparagine 123, and aspartate 124. Asparagine 123 contacts L-citrulline. 4 residues coordinate L-citrulline: arginine 127, serine 175, glutamate 260, and tyrosine 272.

The protein belongs to the argininosuccinate synthase family. Type 1 subfamily. In terms of assembly, homotetramer.

It localises to the cytoplasm. The catalysed reaction is L-citrulline + L-aspartate + ATP = 2-(N(omega)-L-arginino)succinate + AMP + diphosphate + H(+). Its pathway is amino-acid biosynthesis; L-arginine biosynthesis; L-arginine from L-ornithine and carbamoyl phosphate: step 2/3. In Bacillus velezensis (strain DSM 23117 / BGSC 10A6 / LMG 26770 / FZB42) (Bacillus amyloliquefaciens subsp. plantarum), this protein is Argininosuccinate synthase.